Consider the following 257-residue polypeptide: Acetylglutamate kinase (257 aa).

Substrate contacts are provided by residues 43–44 (GG), R65, and N157. Residues 180–185 (DISGIL) and 208–210 (IIT) contribute to the ATP site.

The protein belongs to the acetylglutamate kinase family. ArgB subfamily. As to quaternary structure, homodimer.

It localises to the cytoplasm. It catalyses the reaction N-acetyl-L-glutamate + ATP = N-acetyl-L-glutamyl 5-phosphate + ADP. Its pathway is amino-acid biosynthesis; L-arginine biosynthesis; N(2)-acetyl-L-ornithine from L-glutamate: step 2/4. In terms of biological role, catalyzes the ATP-dependent phosphorylation of N-acetyl-L-glutamate. In Sodalis glossinidius (strain morsitans), this protein is Acetylglutamate kinase.